A 378-amino-acid chain; its full sequence is MRMKQTIPSSYVGLKINEWYTHIRQFHVAEAERVKLEVEREIEDMEEDQDLLLYYSLMEFRHRVMLDYIKPFGEDTSQLEFSELLEDIEGNQYKLTGLLEYYFNFFRGMYEFKQKMFVSAMMYYKRAEKNLALVSDDIEKAEFAFKMAEIFYNLKQTYVSMSYAVQALETYQMYETYTVRRIQCEFVIAGNYDDMQYPERALPHLELALDLAKKEGNPRLISSALYNLGNCYEKMGELQKAAEYFGKSVSICKSEKFDNLPHSIYSLTQVLYKQKNDAEAQKKYREGLEIARQYSDELFVELFQFLHALYGKNIDTESVSHTFQFLEEHMLYPYIEELAHDAAQFYIENGQPEKALSFYEKMVHAQKQIQRGDCLYEI.

6 TPR repeats span residues 101–137 (YYFN…VSDD), 148–181 (AEIF…TVRR), 183–215 (QCEF…AKKE), 222–255 (SSAL…CKSE), 261–294 (PHSI…ARQY), and 336–369 (EELA…QKQI).

Belongs to the Rap family. Homodimer. Interacts with its substrate, phosphorylated Spo0F, and its inhibitor, the PhrA pentapeptide. The RapA dimer forms a stable complex with two molecules of phosphorylated Spo0F. The complex is dissociated after dephosphorylation of Spo0F by RapA. Requires Mn(2+) as cofactor.

The protein resides in the cytoplasm. Its activity is regulated as follows. Phosphatase activity is inhibited by the phosphatase regulator PhrA. Interaction with PhrA dissociates the RapA-Spo0F complex. Activity is abolished in the presence of EDTA. Involved in the regulation of sporulation. Acts as a phosphatase that specifically dephosphorylates the sporulation initiation phosphotransferase Spo0F and inhibits its activity. The chain is Response regulator aspartate phosphatase A from Bacillus subtilis (strain 168).